The primary structure comprises 396 residues: Subtelomeric hrmA-associated cluster protein AFUB_079040 (396 aa).

Disordered regions lie at residues 1 to 32 and 347 to 396; these read MANKKKPSIKKSVNEPNPHLKQSHASGSQQSL and YPEN…ECGR. Residues 23–32 are compositionally biased toward polar residues; the sequence is SHASGSQQSL. The span at 367–380 shows a compositional bias: basic residues; the sequence is SKKKKDKKKKKSNK.

Part of the subtelomeric hrmA-associated cluster (HAC) containing genes that alter the hyphal surface (such as reduced total chitin or increased beta-glucan exposure) and perturb inter-hyphal interactions within the developing biofilms, resulting in a loss of vertically aligned polarized growing filaments. Consequently, this hypoxia-typic morphotype (called H-MORPH) with altered biofilm architecture leads to increased hypoxia fitness, increased host inflammation, rapid disease progression, and mortality in a murine model of invasive aspergillosis. The polypeptide is Subtelomeric hrmA-associated cluster protein AFUB_079040 (Aspergillus fumigatus (strain CBS 144.89 / FGSC A1163 / CEA10) (Neosartorya fumigata)).